The chain runs to 295 residues: MAPSNLPPVFNATSQDIEMLLAAQCHLGSKNLQVHMEPYLWKTRPDGINVINIGKTWEKIVLAARIIAAIDNPADICVISARPYGQRAVLKFAAHTGAVAIAGRFTPGNFTNYITRSFKEPRLIIVTDPRTDSQAIKEASYVNIPVIALCDTDSPTEFVDVAIPTNNKGRHAIGLIWWMLAREVLRLRGTLANRETEWDVVVDLYFYRDPEAEENKEIEETKVPGAEEVGAAAIESGLVGDSWQAQATPGFSAGVAVPGTAVPGWEADVSTDWAASSAPAAETLADPAADPSVKW.

Belongs to the universal ribosomal protein uS2 family. Component of the small ribosomal subunit. Mature ribosomes consist of a small (40S) and a large (60S) subunit. The 40S subunit contains about 33 different proteins and 1 molecule of RNA (18S). The 60S subunit contains about 49 different proteins and 3 molecules of RNA (25S, 5.8S and 5S). Interacts with RPS21.

The protein resides in the cytoplasm. Functionally, required for the assembly and/or stability of the 40S ribosomal subunit. Required for the processing of the 20S rRNA-precursor to mature 18S rRNA in a late step of the maturation of 40S ribosomal subunits. The polypeptide is Small ribosomal subunit protein uS2 (Paracoccidioides brasiliensis (strain Pb18)).